A 145-amino-acid chain; its full sequence is D-aminoacyl-tRNA deacylase (145 aa).

Positions 137–138 (GP) match the Gly-cisPro motif, important for rejection of L-amino acids motif.

Belongs to the DTD family. Homodimer.

It is found in the cytoplasm. It catalyses the reaction glycyl-tRNA(Ala) + H2O = tRNA(Ala) + glycine + H(+). The catalysed reaction is a D-aminoacyl-tRNA + H2O = a tRNA + a D-alpha-amino acid + H(+). In terms of biological role, an aminoacyl-tRNA editing enzyme that deacylates mischarged D-aminoacyl-tRNAs. Also deacylates mischarged glycyl-tRNA(Ala), protecting cells against glycine mischarging by AlaRS. Acts via tRNA-based rather than protein-based catalysis; rejects L-amino acids rather than detecting D-amino acids in the active site. By recycling D-aminoacyl-tRNA to D-amino acids and free tRNA molecules, this enzyme counteracts the toxicity associated with the formation of D-aminoacyl-tRNA entities in vivo and helps enforce protein L-homochirality. The polypeptide is D-aminoacyl-tRNA deacylase (Ectopseudomonas mendocina (strain ymp) (Pseudomonas mendocina)).